Consider the following 337-residue polypeptide: tRNA N6-adenosine threonylcarbamoyltransferase (337 aa).

Fe cation contacts are provided by His-110 and His-114. Substrate contacts are provided by residues 132–136 (VVSGG), Asp-165, Gly-178, Asp-182, and Asn-268. Asp-293 provides a ligand contact to Fe cation.

The protein belongs to the KAE1 / TsaD family. Fe(2+) serves as cofactor.

It is found in the cytoplasm. The catalysed reaction is L-threonylcarbamoyladenylate + adenosine(37) in tRNA = N(6)-L-threonylcarbamoyladenosine(37) in tRNA + AMP + H(+). Functionally, required for the formation of a threonylcarbamoyl group on adenosine at position 37 (t(6)A37) in tRNAs that read codons beginning with adenine. Is involved in the transfer of the threonylcarbamoyl moiety of threonylcarbamoyl-AMP (TC-AMP) to the N6 group of A37, together with TsaE and TsaB. TsaD likely plays a direct catalytic role in this reaction. The chain is tRNA N6-adenosine threonylcarbamoyltransferase from Sulfurihydrogenibium sp. (strain YO3AOP1).